A 344-amino-acid polypeptide reads, in one-letter code: Cyclin-D1-binding protein 1 homolog (344 aa).

Positions 191–215 (SQDPFGDVLDDDDDDEGGRGNQDRY) are disordered.

It belongs to the CCNDBP1 family.

It localises to the cytoplasm. The protein resides in the nucleus. In terms of biological role, may negatively regulate cell cycle progression. This is Cyclin-D1-binding protein 1 homolog (ccndbp1) from Danio rerio (Zebrafish).